A 1463-amino-acid polypeptide reads, in one-letter code: MMSFVQCGTWFLLTLLHPSLILAQQSNVDELGCNYLGQSYESRDVWKPEPCQICVCDSGSVLCDDIMCDDEPLDCPNPEIPFGECCAICPQPSTPAPVIPDGNRPQGPKGDPGPPGIPGRNGDPGLPGQPGLPGPPGSPGICESCPTGGQNYSPQFDSYDVKSGVGGMGGYPGPAGPPGPPGPPGSSGHPGSPGSPGYQGPPGEPGQAGPAGPPGPPGAIGPSGPAGKDGESGRPGRPGERGLPGPPGIKGPAGIPGFPGMKGHRGFDGRNGEKGETGAPGLKGENGLPGDNGAPGPMGPRGAPGERGRPGLPGAAGARGNDGARGSDGQPGPPGPPGTAGFPGSPGAKGEVGPAGSPGSNGSPGQRGEPGPQGHAGAQGPPGPPGNNGSPGGKGEMGPAGIPGAPGLLGARGPPGPAGANGAPGQRGPSGEPGKNGAKGEPGARGERGEAGSPGIPGPKGEDGKDGSPGEPGANGVPGNPGERGAPGFRGPAGPNGAPGEKGPAGERGGPGPAGPRGVAGEPGRDGTPGGPGIRGMPGSPGGPGNDGKPGPPGSQGESGRPGPPGPSGPRGQPGVMGFPGPKGNDGAPGKNGERGGPGGPGLPGPAGKNGETGPQGPPGPTGAPGDKGDAGPPGPQGLQGIPGTSGPPGENGKPGEPGPKGEAGAPGVPGGKGDSGAPGERGPPGTAGTPGLRGGAGPPGPEGGKGPAGPPGPPGTSGPPGLQGMPGERGGPGSPGPKGEKGEPGGAGADGVPGKDGPRGPAGPIGPPGPAGQPGDKGEGGAPGLPGIAGPRGGPGERGEHGPPGPAGFPGAPGQNGEPGAKGERGAPGEKGEGGPPGAAGPPGGSGPAGPPGPQGVKGERGSPGGPGAAGFPGGRGLPGPPGNNGNPGPPGPSGAPGKDGPPGPAGNSGSPGNPGVAGPKGDAGQPGEKGPPGAQGPPGSPGPLGIAGLTGARGLAGPPGMPGPRGSPGPQGIKGESGKPGASGHNGERGPPGPQGLPGQPGTAGEPGRDGNPGSDGQPGRDGSPGGKGDRGENGSPGAPGAPGHPGPPGPVGPSGKNGDRGETGPAGPSGAPGPAGARGAPGPQGPRGDKGETGERGSNGIKGHRGFPGNPGPPGSPGAAGHQGAVGSPGPAGPRGPVGPHGPPGKDGSSGHPGPIGPPGPRGNRGERGSEGSPGHPGQPGPPGPPGAPGPCCGGGAAIAGVGGEKSGGFSPYYGDDPMDFKINTEEIMSSLKSVNGQIESLISPDGSRKNPARNCRDLKFCHPELKSGEYWVDPNQGCKMDAIKVFCNMETGETCINASPMTVPRKHWWTDAGAEKKHVWFGESMNGGFQFSYGNPDLPEDVLDVQLAFLRLLSSRASQNITYHCKNSIAYMDQANGNVKKSLKLMGSNEGEFKAEGNSKFTYTVLEDGCTKHTGEWSKTVFEYQTRKAMRLPIIDIAPYDIGGPDQEFGVDIGPVCFL.

Positions 1 to 23 (MMSFVQCGTWFLLTLLHPSLILA) are cleaved as a signal peptide. Positions 24-154 (QQSNVDELGC…CPTGGQNYSP (131 aa)) are cleaved as a propeptide — N-terminal propeptide. A VWFC domain is found at 31-90 (LGCNYLGQSYESRDVWKPEPCQICVCDSGSVLCDDIMCDDEPLDCPNPEIPFGECCAICP). The tract at residues 97 to 1195 (PVIPDGNRPQ…PGPPGAPGPC (1099 aa)) is disordered. Residues 147 to 156 (TGGQNYSPQF) are compositionally biased toward polar residues. A nonhelical region (N-terminal) region spans residues 155–169 (QFDSYDVKSGVGGMG). Residues 164–173 (GVGGMGGYPG) are compositionally biased toward gly residues. The tract at residues 170–1195 (GYPGPAGPPG…PGPPGAPGPC (1026 aa)) is triple-helical region. The span at 174-184 (PAGPPGPPGPP) shows a compositional bias: pro residues. Residues 186–198 (SSGHPGSPGSPGY) are compositionally biased toward low complexity. A compositionally biased stretch (basic and acidic residues) spans 228–240 (KDGESGRPGRPGE). A compositionally biased stretch (low complexity) spans 250-259 (KGPAGIPGFP). Lysine 262 is subject to 5-hydroxylysine; alternate. O-linked (Gal...) hydroxylysine; alternate glycosylation occurs at lysine 262. Over residues 265–276 (RGFDGRNGEKGE) the composition is skewed to basic and acidic residues. A 5-hydroxylysine modification is found at lysine 283. 2 stretches are compositionally biased toward low complexity: residues 310-321 (PGLPGAAGARGN) and 354-379 (PAGSPGSNGSPGQRGEPGPQGHAGAQ). The segment covering 389–398 (GSPGGKGEMG) has biased composition (gly residues). 2 stretches are compositionally biased toward low complexity: residues 399-429 (PAGIPGAPGLLGARGPPGPAGANGAPGQRGP) and 481-502 (PGERGAPGFRGPAGPNGAPGEK). The span at 527–548 (GTPGGPGIRGMPGSPGGPGNDG) shows a compositional bias: gly residues. Composition is skewed to low complexity over residues 606–615 (PAGKNGETGP) and 637–652 (QGLQGIPGTSGPPGEN). Over residues 668-677 (GVPGGKGDSG) the composition is skewed to gly residues. The segment covering 678-691 (APGERGPPGTAGTP) has biased composition (low complexity). Gly residues predominate over residues 692–708 (GLRGGAGPPGPEGGKGP). The span at 709-718 (AGPPGPPGTS) shows a compositional bias: pro residues. Residues 822–834 (AKGERGAPGEKGE) show a composition bias toward basic and acidic residues. Residues 835–849 (GGPPGAAGPPGGSGP) are compositionally biased toward gly residues. Lysine 859 carries the post-translational modification 5-hydroxylysine. The span at 863 to 879 (GSPGGPGAAGFPGGRGL) shows a compositional bias: gly residues. The span at 889–906 (PGPPGPSGAPGKDGPPGP) shows a compositional bias: pro residues. Composition is skewed to low complexity over residues 907–934 (AGNSGSPGNPGVAGPKGDAGQPGEKGPP) and 945–960 (PLGIAGLTGARGLAGP). 5-hydroxylysine is present on lysine 976. Pro residues predominate over residues 1045-1054 (PGHPGPPGPV). Residues 1068–1084 (PAGPSGAPGPAGARGAP) show a composition bias toward low complexity. Residues lysine 1093 and lysine 1105 each carry the 5-hydroxylysine modification. Over residues 1120-1132 (PGAAGHQGAVGSP) the composition is skewed to low complexity. Positions 1180–1192 (PGQPGPPGPPGAP) are enriched in pro residues. Positions 1219–1463 (DDPMDFKINT…GVDIGPVCFL (245 aa)) are cleaved as a propeptide — C-terminal propeptide. Positions 1229-1463 (EEIMSSLKSV…GVDIGPVCFL (235 aa)) constitute a Fibrillar collagen NC1 domain. 3 cysteine pairs are disulfide-bonded: cysteine 1259-cysteine 1291, cysteine 1299-cysteine 1461, and cysteine 1369-cysteine 1414. Ca(2+) contacts are provided by aspartate 1277, asparagine 1279, glutamine 1280, cysteine 1282, and aspartate 1285.

The protein belongs to the fibrillar collagen family. Trimers of identical alpha 1(III) chains. The chains are linked to each other by interchain disulfide bonds. Trimers are also cross-linked via hydroxylysines. Interacts with ADGRG1. Post-translationally, O-glycosylated. Prolines at the third position of the tripeptide repeating unit (G-X-Y) are hydroxylated in some or all of the chains.

The protein localises to the secreted. It is found in the extracellular space. Its subcellular location is the extracellular matrix. Functionally, collagen type III occurs in most soft connective tissues along with type I collagen. Involved in regulation of cortical development. Is the major ligand of ADGRG1 in the developing brain and binding to ADGRG1 inhibits neuronal migration and activates the RhoA pathway by coupling ADGRG1 to GNA13 and possibly GNA12. The sequence is that of Collagen alpha-1(III) chain (Col3a1) from Rattus norvegicus (Rat).